We begin with the raw amino-acid sequence, 260 residues long: Lysine/arginine/ornithine-binding periplasmic protein (260 aa).

Positions M1 to A22 are cleaved as a signal peptide. D33 is a binding site for L-arginine. D33 is a binding site for L-lysine. An L-ornithine-binding site is contributed by D33. A disulfide bridge links C60 with C67. L-arginine-binding residues include S91, S92, S94, R99, T143, and D183. L-ornithine-binding residues include S91, S92, S94, R99, T143, and D183. L-lysine-binding residues include S92, S94, R99, and T143.

It belongs to the bacterial solute-binding protein 3 family. As to quaternary structure, the complex is composed of two ATP-binding proteins (HisP), two transmembrane proteins (HisM and HisQ) and a solute-binding protein (ArgT).

Its subcellular location is the periplasm. Functionally, part of the ABC transporter complex HisPMQ-ArgT involved in lysine/arginine/ornithine transport. Binds lysine, arginine and ornithine. Stimulates ATPase activity of HisP. The chain is Lysine/arginine/ornithine-binding periplasmic protein (argT) from Escherichia coli (strain K12).